Reading from the N-terminus, the 280-residue chain is Protein phosphatase 1 regulatory subunit 3B-A (280 aa).

A PP1-binding motif motif is present at residues 58–61; the sequence is RVSF. Residues 121–229 enclose the CBM21 domain; the sequence is RNRLQADSVC…SNKSLNYKIA (109 aa).

Interacts with glycogen, PPP1CC catalytic subunit of PP1 and PYGL. Associates with glycogen particles. Forms complexes with debranching enzyme, glycogen phosphorylase, glycogen synthase and phosphorylase kinase which is necessary for its regulation of PP1 activity.

Its function is as follows. Acts as a glycogen-targeting subunit for phosphatase PP1. Facilitates interaction of the PP1 with enzymes of the glycogen metabolism and regulates its activity. Suppresses the rate at which PP1 dephosphorylates (inactivates) glycogen phosphorylase and enhances the rate at which it activates glycogen synthase and therefore limits glycogen breakdown. In Xenopus laevis (African clawed frog), this protein is Protein phosphatase 1 regulatory subunit 3B-A (ppp1r3b-a).